The chain runs to 265 residues: Octanoyltransferase (265 aa).

One can recognise a BPL/LPL catalytic domain in the interval 35 to 254; it reads DEVPDTVLLL…HLRDVLENAE (220 aa). Substrate is bound by residues 73–80, 184–186, and 197–199; these read RGGKITWH, AIG, and GFA. The active-site Acyl-thioester intermediate is Cys-215.

It belongs to the LipB family.

The protein resides in the cytoplasm. The enzyme catalyses octanoyl-[ACP] + L-lysyl-[protein] = N(6)-octanoyl-L-lysyl-[protein] + holo-[ACP] + H(+). It participates in protein modification; protein lipoylation via endogenous pathway; protein N(6)-(lipoyl)lysine from octanoyl-[acyl-carrier-protein]: step 1/2. Catalyzes the transfer of endogenously produced octanoic acid from octanoyl-acyl-carrier-protein onto the lipoyl domains of lipoate-dependent enzymes. Lipoyl-ACP can also act as a substrate although octanoyl-ACP is likely to be the physiological substrate. In Streptomyces coelicolor (strain ATCC BAA-471 / A3(2) / M145), this protein is Octanoyltransferase.